Consider the following 417-residue polypeptide: Serine hydroxymethyltransferase 2 (417 aa).

(6S)-5,6,7,8-tetrahydrofolate contacts are provided by residues Leu121 and 125–127 (GHL). Lys230 is modified (N6-(pyridoxal phosphate)lysine). A (6S)-5,6,7,8-tetrahydrofolate-binding site is contributed by 355 to 357 (SPF).

This sequence belongs to the SHMT family. In terms of assembly, homodimer. Pyridoxal 5'-phosphate serves as cofactor.

It localises to the cytoplasm. It carries out the reaction (6R)-5,10-methylene-5,6,7,8-tetrahydrofolate + glycine + H2O = (6S)-5,6,7,8-tetrahydrofolate + L-serine. Its pathway is one-carbon metabolism; tetrahydrofolate interconversion. It participates in amino-acid biosynthesis; glycine biosynthesis; glycine from L-serine: step 1/1. Its function is as follows. Catalyzes the reversible interconversion of serine and glycine with tetrahydrofolate (THF) serving as the one-carbon carrier. This reaction serves as the major source of one-carbon groups required for the biosynthesis of purines, thymidylate, methionine, and other important biomolecules. Also exhibits THF-independent aldolase activity toward beta-hydroxyamino acids, producing glycine and aldehydes, via a retro-aldol mechanism. In Pseudomonas savastanoi pv. phaseolicola (strain 1448A / Race 6) (Pseudomonas syringae pv. phaseolicola (strain 1448A / Race 6)), this protein is Serine hydroxymethyltransferase 2.